The sequence spans 345 residues: D-alanine--D-alanine ligase (345 aa).

Residues 133 to 332 (KWLCHARGVK…LPHTKRAKVT (200 aa)) form the ATP-grasp domain. An ATP-binding site is contributed by 160–211 (AYPIIVKPSRLGSSIGVSIVKDESKLDYALDSAFEFDNTVIVEPFLEGVKEY). Mg(2+) contacts are provided by Asp284, Glu296, and Asn298.

The protein belongs to the D-alanine--D-alanine ligase family. The cofactor is Mg(2+). Mn(2+) is required as a cofactor.

It localises to the cytoplasm. It catalyses the reaction 2 D-alanine + ATP = D-alanyl-D-alanine + ADP + phosphate + H(+). It functions in the pathway cell wall biogenesis; peptidoglycan biosynthesis. In terms of biological role, cell wall formation. This chain is D-alanine--D-alanine ligase, found in Sulfurimonas denitrificans (strain ATCC 33889 / DSM 1251) (Thiomicrospira denitrificans (strain ATCC 33889 / DSM 1251)).